The chain runs to 635 residues: Threonine--tRNA ligase (635 aa).

The 61-residue stretch at 1-61 (MIKITLKDGK…HKDSSLEILT (61 aa)) folds into the TGS domain. The segment at 242–532 (DHRKLGKELD…LIEQYAGAFP (291 aa)) is catalytic. 3 residues coordinate Zn(2+): C333, H384, and H509.

Belongs to the class-II aminoacyl-tRNA synthetase family. In terms of assembly, homodimer. It depends on Zn(2+) as a cofactor.

It localises to the cytoplasm. The catalysed reaction is tRNA(Thr) + L-threonine + ATP = L-threonyl-tRNA(Thr) + AMP + diphosphate + H(+). In terms of biological role, catalyzes the attachment of threonine to tRNA(Thr) in a two-step reaction: L-threonine is first activated by ATP to form Thr-AMP and then transferred to the acceptor end of tRNA(Thr). Also edits incorrectly charged L-seryl-tRNA(Thr). This chain is Threonine--tRNA ligase, found in Clostridium botulinum (strain ATCC 19397 / Type A).